Here is a 485-residue protein sequence, read N- to C-terminus: UDP-N-acetylmuramoyl-L-alanyl-D-glutamate--2,6-diaminopimelate ligase (485 aa).

Serine 30 serves as a coordination point for UDP-N-acetyl-alpha-D-muramoyl-L-alanyl-D-glutamate. 113–119 contacts ATP; sequence GTNGKTT. Residues 155–156, serine 182, and arginine 190 each bind UDP-N-acetyl-alpha-D-muramoyl-L-alanyl-D-glutamate; that span reads TT. Lysine 222 is subject to N6-carboxylysine. Meso-2,6-diaminopimelate is bound by residues arginine 381, 405 to 408, glycine 455, and glutamate 459; that span reads DNPR. Positions 405–408 match the Meso-diaminopimelate recognition motif motif; that stretch reads DNPR.

This sequence belongs to the MurCDEF family. MurE subfamily. The cofactor is Mg(2+). Post-translationally, carboxylation is probably crucial for Mg(2+) binding and, consequently, for the gamma-phosphate positioning of ATP.

It is found in the cytoplasm. The enzyme catalyses UDP-N-acetyl-alpha-D-muramoyl-L-alanyl-D-glutamate + meso-2,6-diaminopimelate + ATP = UDP-N-acetyl-alpha-D-muramoyl-L-alanyl-gamma-D-glutamyl-meso-2,6-diaminopimelate + ADP + phosphate + H(+). It functions in the pathway cell wall biogenesis; peptidoglycan biosynthesis. In terms of biological role, catalyzes the addition of meso-diaminopimelic acid to the nucleotide precursor UDP-N-acetylmuramoyl-L-alanyl-D-glutamate (UMAG) in the biosynthesis of bacterial cell-wall peptidoglycan. This Clostridium tetani (strain Massachusetts / E88) protein is UDP-N-acetylmuramoyl-L-alanyl-D-glutamate--2,6-diaminopimelate ligase.